A 465-amino-acid polypeptide reads, in one-letter code: Light-independent protochlorophyllide reductase subunit N (465 aa).

Positions 23, 48, and 108 each coordinate [4Fe-4S] cluster.

Belongs to the BchN/ChlN family. As to quaternary structure, protochlorophyllide reductase is composed of three subunits; ChlL, ChlN and ChlB. Forms a heterotetramer of two ChlB and two ChlN subunits. [4Fe-4S] cluster serves as cofactor.

The catalysed reaction is chlorophyllide a + oxidized 2[4Fe-4S]-[ferredoxin] + 2 ADP + 2 phosphate = protochlorophyllide a + reduced 2[4Fe-4S]-[ferredoxin] + 2 ATP + 2 H2O. The protein operates within porphyrin-containing compound metabolism; chlorophyll biosynthesis (light-independent). In terms of biological role, component of the dark-operative protochlorophyllide reductase (DPOR) that uses Mg-ATP and reduced ferredoxin to reduce ring D of protochlorophyllide (Pchlide) to form chlorophyllide a (Chlide). This reaction is light-independent. The NB-protein (ChlN-ChlB) is the catalytic component of the complex. The sequence is that of Light-independent protochlorophyllide reductase subunit N from Trichodesmium erythraeum (strain IMS101).